The chain runs to 557 residues: Formate--tetrahydrofolate ligase (557 aa).

Position 65–72 (65–72) interacts with ATP; the sequence is TPAGEGKT.

This sequence belongs to the formate--tetrahydrofolate ligase family.

The catalysed reaction is (6S)-5,6,7,8-tetrahydrofolate + formate + ATP = (6R)-10-formyltetrahydrofolate + ADP + phosphate. It participates in one-carbon metabolism; tetrahydrofolate interconversion. This chain is Formate--tetrahydrofolate ligase, found in Methylobacterium radiotolerans (strain ATCC 27329 / DSM 1819 / JCM 2831 / NBRC 15690 / NCIMB 10815 / 0-1).